Consider the following 442-residue polypeptide: Glutamate-1-semialdehyde 2,1-aminomutase (442 aa).

Position 282 is an N6-(pyridoxal phosphate)lysine (Lys282).

This sequence belongs to the class-III pyridoxal-phosphate-dependent aminotransferase family. HemL subfamily. As to quaternary structure, homodimer. Pyridoxal 5'-phosphate is required as a cofactor.

The protein resides in the cytoplasm. It carries out the reaction (S)-4-amino-5-oxopentanoate = 5-aminolevulinate. It functions in the pathway porphyrin-containing compound metabolism; protoporphyrin-IX biosynthesis; 5-aminolevulinate from L-glutamyl-tRNA(Glu): step 2/2. This is Glutamate-1-semialdehyde 2,1-aminomutase from Polaromonas sp. (strain JS666 / ATCC BAA-500).